Here is a 91-residue protein sequence, read N- to C-terminus: DNA-binding protein HRL18 (91 aa).

The protein belongs to the bacterial histone-like protein family.

In terms of biological role, histone-like DNA-binding protein which is capable of wrapping DNA to stabilize it, and thus to prevent its denaturation under extreme environmental conditions. This is DNA-binding protein HRL18 from Rhizobium leguminosarum.